The chain runs to 338 residues: Glyceraldehyde-3-phosphate dehydrogenase 2 (338 aa).

Residues 12 to 13 (RI), aspartate 34, and arginine 79 contribute to the NAD(+) site. Residues 150–152 (SCT), threonine 181, 210–211 (TG), and arginine 233 each bind D-glyceraldehyde 3-phosphate. Cysteine 151 (nucleophile) is an active-site residue. Asparagine 315 is a binding site for NAD(+).

It belongs to the glyceraldehyde-3-phosphate dehydrogenase family. Homotetramer.

The protein localises to the cytoplasm. It catalyses the reaction D-glyceraldehyde 3-phosphate + phosphate + NAD(+) = (2R)-3-phospho-glyceroyl phosphate + NADH + H(+). The protein operates within carbohydrate degradation; glycolysis; pyruvate from D-glyceraldehyde 3-phosphate: step 1/5. The chain is Glyceraldehyde-3-phosphate dehydrogenase 2 (GPD2) from Mucor circinelloides f. lusitanicus (Mucor racemosus var. lusitanicus).